A 379-amino-acid chain; its full sequence is Putative nucleosome assembly protein C2D10.11C (379 aa).

Over residues 1 to 10 the composition is skewed to basic and acidic residues; that stretch reads MSKGPGDFKK. 2 disordered regions span residues 1-30 and 345-379; these read MSKGPGDFKKSWNGFAAQTPQNTPSSDVHL and SDFNQMDEEDSEDAYTDEEDLSSDDEEILSSEISD. Residues 16-28 show a composition bias toward polar residues; it reads AAQTPQNTPSSDV.

Belongs to the nucleosome assembly protein (NAP) family.

The protein localises to the nucleus. The polypeptide is Putative nucleosome assembly protein C2D10.11C (Schizosaccharomyces pombe (strain 972 / ATCC 24843) (Fission yeast)).